The following is a 1222-amino-acid chain: ATP-dependent helicase/nuclease subunit A (1222 aa).

In terms of domain architecture, UvrD-like helicase ATP-binding spans 39–495; it reads QKRTAQQIEA…ILLKENFRSQ (457 aa). 60–67 is a binding site for ATP; sequence ASAGSGKT. One can recognise a UvrD-like helicase C-terminal domain in the interval 524–810; it reads QLIAGSHAQT…NLMTIHKSKG (287 aa).

It belongs to the helicase family. AddA subfamily. As to quaternary structure, heterodimer of AddA and AddB/RexB. Mg(2+) is required as a cofactor.

The enzyme catalyses Couples ATP hydrolysis with the unwinding of duplex DNA by translocating in the 3'-5' direction.. It catalyses the reaction ATP + H2O = ADP + phosphate + H(+). Functionally, the heterodimer acts as both an ATP-dependent DNA helicase and an ATP-dependent, dual-direction single-stranded exonuclease. Recognizes the chi site generating a DNA molecule suitable for the initiation of homologous recombination. The AddA nuclease domain is required for chi fragment generation; this subunit has the helicase and 3' -&gt; 5' nuclease activities. This Streptococcus pyogenes serotype M12 (strain MGAS2096) protein is ATP-dependent helicase/nuclease subunit A.